A 245-amino-acid polypeptide reads, in one-letter code: 4-hydroxy-tetrahydrodipicolinate reductase (245 aa).

Residues 7–12 (GARGKV), 75–77 (GTT), and 102–105 (APNF) each bind NAD(+). Histidine 132 serves as the catalytic Proton donor/acceptor. Histidine 133 provides a ligand contact to (S)-2,3,4,5-tetrahydrodipicolinate. The active-site Proton donor is lysine 136. Position 142–143 (142–143 (GT)) interacts with (S)-2,3,4,5-tetrahydrodipicolinate.

It belongs to the DapB family.

The protein resides in the cytoplasm. It carries out the reaction (S)-2,3,4,5-tetrahydrodipicolinate + NAD(+) + H2O = (2S,4S)-4-hydroxy-2,3,4,5-tetrahydrodipicolinate + NADH + H(+). The catalysed reaction is (S)-2,3,4,5-tetrahydrodipicolinate + NADP(+) + H2O = (2S,4S)-4-hydroxy-2,3,4,5-tetrahydrodipicolinate + NADPH + H(+). It functions in the pathway amino-acid biosynthesis; L-lysine biosynthesis via DAP pathway; (S)-tetrahydrodipicolinate from L-aspartate: step 4/4. Its function is as follows. Catalyzes the conversion of 4-hydroxy-tetrahydrodipicolinate (HTPA) to tetrahydrodipicolinate. This Mycolicibacterium vanbaalenii (strain DSM 7251 / JCM 13017 / BCRC 16820 / KCTC 9966 / NRRL B-24157 / PYR-1) (Mycobacterium vanbaalenii) protein is 4-hydroxy-tetrahydrodipicolinate reductase.